The following is a 192-amino-acid chain: Large ribosomal subunit protein uL18 (192 aa).

Belongs to the universal ribosomal protein uL18 family. As to quaternary structure, part of the 50S ribosomal subunit. Contacts the 5S and 23S rRNAs.

In terms of biological role, this is one of the proteins that bind and probably mediate the attachment of the 5S RNA into the large ribosomal subunit, where it forms part of the central protuberance. This is Large ribosomal subunit protein uL18 from Methanothermobacter thermautotrophicus (strain ATCC 29096 / DSM 1053 / JCM 10044 / NBRC 100330 / Delta H) (Methanobacterium thermoautotrophicum).